A 221-amino-acid polypeptide reads, in one-letter code: Large ribosomal subunit protein uL3 (221 aa).

The tract at residues 123–156 (GFAGSIKRHNQSRGPESHGSRYHRRPGSMGPIKG) is disordered.

Belongs to the universal ribosomal protein uL3 family. As to quaternary structure, part of the 50S ribosomal subunit. Forms a cluster with proteins L14 and L19.

One of the primary rRNA binding proteins, it binds directly near the 3'-end of the 23S rRNA, where it nucleates assembly of the 50S subunit. The protein is Large ribosomal subunit protein uL3 of Aster yellows witches'-broom phytoplasma (strain AYWB).